A 520-amino-acid chain; its full sequence is 2-isopropylmalate synthase (520 aa).

Positions 12–274 (IRIFDTTLRD…DSAINTPRIV (263 aa)) constitute a Pyruvate carboxyltransferase domain. The Mn(2+) site is built by aspartate 21, histidine 209, histidine 211, and asparagine 245. The tract at residues 396–520 (RLASMTISDV…VIAGKTAAVA (125 aa)) is regulatory domain.

Belongs to the alpha-IPM synthase/homocitrate synthase family. LeuA type 1 subfamily. In terms of assembly, homodimer. Mn(2+) is required as a cofactor.

The protein resides in the cytoplasm. It catalyses the reaction 3-methyl-2-oxobutanoate + acetyl-CoA + H2O = (2S)-2-isopropylmalate + CoA + H(+). It participates in amino-acid biosynthesis; L-leucine biosynthesis; L-leucine from 3-methyl-2-oxobutanoate: step 1/4. Catalyzes the condensation of the acetyl group of acetyl-CoA with 3-methyl-2-oxobutanoate (2-ketoisovalerate) to form 3-carboxy-3-hydroxy-4-methylpentanoate (2-isopropylmalate). The chain is 2-isopropylmalate synthase from Xanthomonas oryzae pv. oryzae (strain MAFF 311018).